A 960-amino-acid polypeptide reads, in one-letter code: MHGHRVPGGPGPSDPERSAANTPGAAPLACADSDPGALEPGLPVSRGSGTALGGPLDPQFVGPSDASLGAPPSSRVLPCGPSPQHHRALRFSYHLEGSQPRPGLHQGNRILVKSLSLDPGQSLEPHPEGPQRLRSDPGPPTEIPGPRPSPLKRAPGPKPQVPPKPSYLQMPRVLPPPEPIPPPPSRPLPADPRVAKGLVPRAEASTSSAAVSSLIEKFEREPVIVASDRPAPGPCPVPPEPAMLPQPPPQPTGSQLPEGEASRCLFLLAPGPRDGEKVPNRDSGIDSISSPSNSEETCFVSDDGPPIHSLCPGPPALASMPVALADPHRPGSQEVDSDLEEEEEEEEEEKEREIPVPPMERQESVELTVQQKVFHIANELLQTEKAYVSRLHLLDQVFCARLLEEARNRSSFPADVVHGIFSNICSIYCFHQQFLLPELEKRMEEWDRYPRIGDILQKLAPFLKMYGEYVKNFDRAVELVNTWTERSTQFKVIIHEVQKEEACGNLTLQHHMLEPVQRIPRYELLLKDYLLKLPHGSPDSKDAQKSLELIATAAEHSNAAIRKMERMHKLLKVYELLGGEEDIVSPTKELIKEGHILKLSAKNGTTQDRYLILFNDRLLYCVPRLRLLGQKFSVRARIDVDGMELKESSNLNMPRTFLVSGKQRSLELQARTEEEKKDWVQAINSTLLKHEQTLETFKLLNSTNRDDEDTPPNSPNVDLGKRAPTPIREKEVTMCMRCQEPFNSITKRRHHCKACGHVVCGKCSEFRARLIYDNNRSNRVCTDCYVALHGAPGSSPACSQHTPQRRRSILEKQASVAAENSVICSFLHYMEKGGKGWHKAWFVVPENEPLVLYIYGAPQDVKAQRSLPLIGFEVGPPEAGERPDRRHVFKITQSHLSWYFSPETEELQRRWMAVLGRAGRGDTFCPGPTLSEDKEMEETPVAASGATAEPPEASQTRDKT.

2 disordered regions span residues 1–210 (MHGH…SSAA) and 226–355 (ASDR…REIP). Residue serine 48 is modified to Phosphoserine. Positions 125-135 (PHPEGPQRLRS) are enriched in basic and acidic residues. 3 stretches are compositionally biased toward pro residues: residues 137–149 (PGPP…PRPS), 156–165 (GPKPQVPPKP), and 173–190 (VLPP…PLPA). The SH3-binding signature appears at 171–187 (PRVLPPPEPIPPPPSRP). Position 205 is a phosphoserine (serine 205). The segment covering 231-251 (APGPCPVPPEPAMLPQPPPQP) has biased composition (pro residues). Basic and acidic residues predominate over residues 273-284 (RDGEKVPNRDSG). Positions 285–294 (IDSISSPSNS) are enriched in low complexity. Residues 335 to 350 (VDSDLEEEEEEEEEEK) are compositionally biased toward acidic residues. Residues 372-560 (KVFHIANELL…ATAAEHSNAA (189 aa)) enclose the DH domain. Residues 589–688 (ELIKEGHILK…WVQAINSTLL (100 aa)) form the PH 1 domain. The interval 701-725 (NSTNRDDEDTPPNSPNVDLGKRAPT) is disordered. Threonine 710 is subject to Phosphothreonine. Serine 714 bears the Phosphoserine mark. An FYVE-type zinc finger spans residues 729-789 (EKEVTMCMRC…VCTDCYVALH (61 aa)). Zn(2+) contacts are provided by cysteine 735, cysteine 738, cysteine 752, cysteine 755, cysteine 760, cysteine 763, cysteine 781, and cysteine 784. A PH 2 domain is found at 820–920 (NSVICSFLHY…WMAVLGRAGR (101 aa)). The interval 922-960 (DTFCPGPTLSEDKEMEETPVAASGATAEPPEASQTRDKT) is disordered.

As to quaternary structure, interacts with DBNL/ABP1 and CTTN. Binds CDC42. May interact with CCPG1.

It localises to the cytoplasm. The protein localises to the cell projection. The protein resides in the lamellipodium. It is found in the ruffle. Its subcellular location is the cytoskeleton. In terms of biological role, activates CDC42, a member of the Ras-like family of Rho- and Rac proteins, by exchanging bound GDP for free GTP. Plays a role in regulating the actin cytoskeleton and cell shape. The polypeptide is FYVE, RhoGEF and PH domain-containing protein 1 (Fgd1) (Mus musculus (Mouse)).